We begin with the raw amino-acid sequence, 482 residues long: tRNA sulfurtransferase (482 aa).

A THUMP domain is found at 61 to 165 (LAIRDALTRI…DDRLLLIKGR (105 aa)). ATP contacts are provided by residues 183–184 (LI), Lys-265, Gly-287, and Gln-296. A disulfide bridge links Cys-344 with Cys-456. One can recognise a Rhodanese domain in the interval 404–482 (FGPNDVILDI…GFANVKVYRP (79 aa)). Cys-456 acts as the Cysteine persulfide intermediate in catalysis.

This sequence belongs to the ThiI family.

It is found in the cytoplasm. It carries out the reaction [ThiI sulfur-carrier protein]-S-sulfanyl-L-cysteine + a uridine in tRNA + 2 reduced [2Fe-2S]-[ferredoxin] + ATP + H(+) = [ThiI sulfur-carrier protein]-L-cysteine + a 4-thiouridine in tRNA + 2 oxidized [2Fe-2S]-[ferredoxin] + AMP + diphosphate. The catalysed reaction is [ThiS sulfur-carrier protein]-C-terminal Gly-Gly-AMP + S-sulfanyl-L-cysteinyl-[cysteine desulfurase] + AH2 = [ThiS sulfur-carrier protein]-C-terminal-Gly-aminoethanethioate + L-cysteinyl-[cysteine desulfurase] + A + AMP + 2 H(+). It functions in the pathway cofactor biosynthesis; thiamine diphosphate biosynthesis. In terms of biological role, catalyzes the ATP-dependent transfer of a sulfur to tRNA to produce 4-thiouridine in position 8 of tRNAs, which functions as a near-UV photosensor. Also catalyzes the transfer of sulfur to the sulfur carrier protein ThiS, forming ThiS-thiocarboxylate. This is a step in the synthesis of thiazole, in the thiamine biosynthesis pathway. The sulfur is donated as persulfide by IscS. The chain is tRNA sulfurtransferase from Salmonella heidelberg (strain SL476).